A 546-amino-acid polypeptide reads, in one-letter code: CTP synthase (546 aa).

The tract at residues 1–269 (MNSNTKIIFV…DAKLVELLNL (269 aa)) is amidoligase domain. S16 contacts CTP. S16 serves as a coordination point for UTP. Residues 17-22 (SLGKGV) and D74 each bind ATP. Mg(2+) contacts are provided by D74 and E143. Residues 150–152 (DIE), 190–195 (KTKPTQ), and K226 each bind CTP. UTP is bound by residues 190–195 (KTKPTQ) and K226. The 253-residue stretch at 294-546 (TIAMVGKYVS…IQAAIENSNN (253 aa)) folds into the Glutamine amidotransferase type-1 domain. G356 serves as a coordination point for L-glutamine. The active-site Nucleophile; for glutamine hydrolysis is the C383. L-glutamine-binding positions include 384 to 387 (LGMQ), E407, and R474. Residues H519 and E521 contribute to the active site.

This sequence belongs to the CTP synthase family. In terms of assembly, homotetramer.

It carries out the reaction UTP + L-glutamine + ATP + H2O = CTP + L-glutamate + ADP + phosphate + 2 H(+). The enzyme catalyses L-glutamine + H2O = L-glutamate + NH4(+). It catalyses the reaction UTP + NH4(+) + ATP = CTP + ADP + phosphate + 2 H(+). The protein operates within pyrimidine metabolism; CTP biosynthesis via de novo pathway; CTP from UDP: step 2/2. With respect to regulation, allosterically activated by GTP, when glutamine is the substrate; GTP has no effect on the reaction when ammonia is the substrate. The allosteric effector GTP functions by stabilizing the protein conformation that binds the tetrahedral intermediate(s) formed during glutamine hydrolysis. Inhibited by the product CTP, via allosteric rather than competitive inhibition. Its function is as follows. Catalyzes the ATP-dependent amination of UTP to CTP with either L-glutamine or ammonia as the source of nitrogen. Regulates intracellular CTP levels through interactions with the four ribonucleotide triphosphates. The protein is CTP synthase of Francisella tularensis subsp. mediasiatica (strain FSC147).